Here is a 195-residue protein sequence, read N- to C-terminus: HTH-type transcriptional regulator BetI (195 aa).

An HTH tetR-type domain is found at 8–68 (EIRRAQLIDA…ATMRHVLRDL (61 aa)). A DNA-binding region (H-T-H motif) is located at residues 31–50 (TLASVAQRANISTGIVSHYF).

It functions in the pathway amine and polyamine biosynthesis; betaine biosynthesis via choline pathway [regulation]. Its function is as follows. Repressor involved in the biosynthesis of the osmoprotectant glycine betaine. It represses transcription of the choline transporter BetT and the genes of BetAB involved in the synthesis of glycine betaine. The polypeptide is HTH-type transcriptional regulator BetI (Burkholderia mallei (strain NCTC 10247)).